Consider the following 699-residue polypeptide: Glutamine--fructose-6-phosphate aminotransferase [isomerizing] (699 aa).

Cysteine 2 (nucleophile) is an active-site residue. Residues 2–303 (CGIFGYANFS…DNDIVHISNG (302 aa)) enclose the Glutamine amidotransferase type-2 domain. SIS domains are found at residues 377-516 (HVSG…QNLV) and 544-689 (SVKS…ADFP).

The enzyme catalyses D-fructose 6-phosphate + L-glutamine = D-glucosamine 6-phosphate + L-glutamate. The protein operates within nucleotide-sugar biosynthesis; UDP-N-acetyl-alpha-D-glucosamine biosynthesis; alpha-D-glucosamine 6-phosphate from D-fructose 6-phosphate: step 1/1. Involved in amino sugar synthesis (formation of chitin, supplies the amino sugars of asparagine-linked oligosaccharides of glycoproteins). This is Glutamine--fructose-6-phosphate aminotransferase [isomerizing] (GFA1) from Encephalitozoon cuniculi (strain GB-M1) (Microsporidian parasite).